The chain runs to 244 residues: Phosphoadenosine 5'-phosphosulfate reductase (244 aa).

Residue Cys-239 is the Nucleophile; cysteine thiosulfonate intermediate of the active site.

It belongs to the PAPS reductase family. CysH subfamily.

The protein resides in the cytoplasm. The catalysed reaction is [thioredoxin]-disulfide + sulfite + adenosine 3',5'-bisphosphate + 2 H(+) = [thioredoxin]-dithiol + 3'-phosphoadenylyl sulfate. Its pathway is sulfur metabolism; hydrogen sulfide biosynthesis; sulfite from sulfate: step 3/3. In terms of biological role, catalyzes the formation of sulfite from phosphoadenosine 5'-phosphosulfate (PAPS) using thioredoxin as an electron donor. This is Phosphoadenosine 5'-phosphosulfate reductase from Shigella flexneri serotype 5b (strain 8401).